Consider the following 183-residue polypeptide: Potassium-transporting ATPase KdpC subunit (183 aa).

The chain crosses the membrane as a helical span at residues 10–30 (ASLLVLSLVTGVAYPLLVTGI).

It belongs to the KdpC family. In terms of assembly, the system is composed of three essential subunits: KdpA, KdpB and KdpC.

The protein localises to the cell inner membrane. In terms of biological role, part of the high-affinity ATP-driven potassium transport (or Kdp) system, which catalyzes the hydrolysis of ATP coupled with the electrogenic transport of potassium into the cytoplasm. This subunit acts as a catalytic chaperone that increases the ATP-binding affinity of the ATP-hydrolyzing subunit KdpB by the formation of a transient KdpB/KdpC/ATP ternary complex. The chain is Potassium-transporting ATPase KdpC subunit from Pseudomonas aeruginosa (strain UCBPP-PA14).